The following is a 243-amino-acid chain: Eukaryotic translation initiation factor 4E-2 (243 aa).

The protein belongs to the eukaryotic initiation factor 4E family. As to quaternary structure, eIF4F is a multi-subunit complex, the composition of which varies with external and internal environmental conditions. It is composed of at least eIF4A, eIF4E and eIF4G. eIF4E is also known to interact with other partners.

Functionally, recognizes and binds the 7-methylguanosine-containing mRNA cap during an early step in the initiation of protein synthesis and facilitates ribosome binding by inducing the unwinding of the mRNAs secondary structures. The protein is Eukaryotic translation initiation factor 4E-2 (tif452) of Schizosaccharomyces pombe (strain 972 / ATCC 24843) (Fission yeast).